A 511-amino-acid polypeptide reads, in one-letter code: Maturase K (511 aa).

This sequence belongs to the intron maturase 2 family. MatK subfamily.

The protein localises to the plastid. It localises to the chloroplast. In terms of biological role, usually encoded in the trnK tRNA gene intron. Probably assists in splicing its own and other chloroplast group II introns. The chain is Maturase K from Nardus stricta (Mat-grass).